A 319-amino-acid chain; its full sequence is RNA exonuclease 4 (319 aa).

The interval 1-75 is disordered; the sequence is MAALSSNWKK…GGVHSSKIEE (75 aa). One can recognise an Exonuclease domain in the interval 132 to 293; sequence KYIAIDCEMV…FRKHKSAFDV (162 aa). Residues 295-319 are disordered; it reads HANRYAPKTASGGGQKGNKPKKKKK.

It belongs to the REXO4 family.

It is found in the nucleus. Functionally, exoribonuclease involved in ribosome biosynthesis. Involved in the processing of ITS1, the internal transcribed spacer localized between the 18S and 5.8S rRNAs. The sequence is that of RNA exonuclease 4 (REX4) from Gibberella zeae (strain ATCC MYA-4620 / CBS 123657 / FGSC 9075 / NRRL 31084 / PH-1) (Wheat head blight fungus).